The following is a 182-amino-acid chain: Ribosome-recycling factor (182 aa).

Belongs to the RRF family.

The protein localises to the cytoplasm. Its function is as follows. Responsible for the release of ribosomes from messenger RNA at the termination of protein biosynthesis. May increase the efficiency of translation by recycling ribosomes from one round of translation to another. This chain is Ribosome-recycling factor, found in Synechococcus sp. (strain JA-2-3B'a(2-13)) (Cyanobacteria bacterium Yellowstone B-Prime).